The following is a 150-amino-acid chain: Glycine cleavage system H-like protein gcvH2 (150 aa).

Residues 44–126 form the Lipoyl-binding domain; that stretch reads VATVGLSSFG…PANNWMVKFK (83 aa).

It belongs to the GcvH family.

The polypeptide is Glycine cleavage system H-like protein gcvH2 (gcvH2) (Dictyostelium discoideum (Social amoeba)).